We begin with the raw amino-acid sequence, 596 residues long: Elongation factor 4 (596 aa).

The tr-type G domain occupies 2-184; the sequence is KHIRNFSIIA…VIVAQIPSPE (183 aa). GTP-binding positions include 14-19 and 131-134; these read DHGKST and NKID.

The protein belongs to the TRAFAC class translation factor GTPase superfamily. Classic translation factor GTPase family. LepA subfamily.

Its subcellular location is the cell inner membrane. It catalyses the reaction GTP + H2O = GDP + phosphate + H(+). In terms of biological role, required for accurate and efficient protein synthesis under certain stress conditions. May act as a fidelity factor of the translation reaction, by catalyzing a one-codon backward translocation of tRNAs on improperly translocated ribosomes. Back-translocation proceeds from a post-translocation (POST) complex to a pre-translocation (PRE) complex, thus giving elongation factor G a second chance to translocate the tRNAs correctly. Binds to ribosomes in a GTP-dependent manner. The sequence is that of Elongation factor 4 from Shewanella sediminis (strain HAW-EB3).